The primary structure comprises 287 residues: Bifunctional protein FolD (287 aa).

NADP(+)-binding positions include 166–168 (GAS) and Ile-232.

This sequence belongs to the tetrahydrofolate dehydrogenase/cyclohydrolase family. As to quaternary structure, homodimer.

It carries out the reaction (6R)-5,10-methylene-5,6,7,8-tetrahydrofolate + NADP(+) = (6R)-5,10-methenyltetrahydrofolate + NADPH. The enzyme catalyses (6R)-5,10-methenyltetrahydrofolate + H2O = (6R)-10-formyltetrahydrofolate + H(+). The protein operates within one-carbon metabolism; tetrahydrofolate interconversion. In terms of biological role, catalyzes the oxidation of 5,10-methylenetetrahydrofolate to 5,10-methenyltetrahydrofolate and then the hydrolysis of 5,10-methenyltetrahydrofolate to 10-formyltetrahydrofolate. In Buchnera aphidicola subsp. Baizongia pistaciae (strain Bp), this protein is Bifunctional protein FolD.